We begin with the raw amino-acid sequence, 492 residues long: Glutamyl-tRNA(Gln) amidotransferase subunit A (492 aa).

Catalysis depends on charge relay system residues Lys78 and Ser158. Ser182 (acyl-ester intermediate) is an active-site residue.

It belongs to the amidase family. GatA subfamily. As to quaternary structure, heterotrimer of A, B and C subunits.

It catalyses the reaction L-glutamyl-tRNA(Gln) + L-glutamine + ATP + H2O = L-glutaminyl-tRNA(Gln) + L-glutamate + ADP + phosphate + H(+). Its function is as follows. Allows the formation of correctly charged Gln-tRNA(Gln) through the transamidation of misacylated Glu-tRNA(Gln) in organisms which lack glutaminyl-tRNA synthetase. The reaction takes place in the presence of glutamine and ATP through an activated gamma-phospho-Glu-tRNA(Gln). This is Glutamyl-tRNA(Gln) amidotransferase subunit A from Rhodopseudomonas palustris (strain ATCC BAA-98 / CGA009).